The following is a 473-amino-acid chain: ATP synthase subunit beta (473 aa).

158–165 is an ATP binding site; that stretch reads GGAGVGKT.

It belongs to the ATPase alpha/beta chains family. In terms of assembly, F-type ATPases have 2 components, CF(1) - the catalytic core - and CF(0) - the membrane proton channel. CF(1) has five subunits: alpha(3), beta(3), gamma(1), delta(1), epsilon(1). CF(0) has three main subunits: a(1), b(2) and c(9-12). The alpha and beta chains form an alternating ring which encloses part of the gamma chain. CF(1) is attached to CF(0) by a central stalk formed by the gamma and epsilon chains, while a peripheral stalk is formed by the delta and b chains.

The protein localises to the cell membrane. The enzyme catalyses ATP + H2O + 4 H(+)(in) = ADP + phosphate + 5 H(+)(out). Functionally, produces ATP from ADP in the presence of a proton gradient across the membrane. The catalytic sites are hosted primarily by the beta subunits. This is ATP synthase subunit beta from Bacillus sp. (strain PS3).